The following is a 529-amino-acid chain: GMP synthase [glutamine-hydrolyzing] (529 aa).

Residues R9–L211 form the Glutamine amidotransferase type-1 domain. C86 serves as the catalytic Nucleophile. Residues H185 and E187 contribute to the active site. The region spanning W212–R404 is the GMPS ATP-PPase domain. S239–S245 provides a ligand contact to ATP.

In terms of assembly, homodimer.

It catalyses the reaction XMP + L-glutamine + ATP + H2O = GMP + L-glutamate + AMP + diphosphate + 2 H(+). Its pathway is purine metabolism; GMP biosynthesis; GMP from XMP (L-Gln route): step 1/1. Its function is as follows. Catalyzes the synthesis of GMP from XMP. In Aeromonas hydrophila subsp. hydrophila (strain ATCC 7966 / DSM 30187 / BCRC 13018 / CCUG 14551 / JCM 1027 / KCTC 2358 / NCIMB 9240 / NCTC 8049), this protein is GMP synthase [glutamine-hydrolyzing].